The following is a 332-amino-acid chain: 3-ketodihydrosphingosine reductase (332 aa).

Residues 1 to 25 form the signal peptide; that stretch reads MLLLAAAGLVAFVLLLYMVSPLISP. The Cytoplasmic segment spans residues 26–270; sequence KPLALPGAHV…GNFNSSIGSD (245 aa). NADPH contacts are provided by glycine 39, serine 41, serine 42, glycine 43, arginine 64, lysine 68, and aspartate 93. The short motif at 39-43 is the GXSXG element; that stretch reads GGSSG. Serine 172 (proton donor) is an active-site residue. Catalysis depends on tyrosine 186, which acts as the Proton acceptor. Residues tyrosine 186 and lysine 190 each contribute to the NADP(+) site. Lysine 190 serves as the catalytic Lowers pKa of active site Tyr. The chain crosses the membrane as a helical span at residues 271–291; that stretch reads GYMLSSLTCGMAPVTSITEGL. Topologically, residues 292-293 are lumenal; the sequence is QQ. A helical transmembrane segment spans residues 294-314; it reads VVTMGLFRTIALFYLGSFDNI. Over 315–332 the chain is Cytoplasmic; the sequence is VRRCMVQKAKPEVVDKTA.

It belongs to the short-chain dehydrogenases/reductases (SDR) family.

Its subcellular location is the endoplasmic reticulum membrane. It carries out the reaction sphinganine + NADP(+) = 3-oxosphinganine + NADPH + H(+). It participates in lipid metabolism; sphingolipid metabolism. Catalyzes the reduction of 3'-oxosphinganine (3-ketodihydrosphingosine/KDS) to sphinganine (dihydrosphingosine/DHS), the second step of de novo sphingolipid biosynthesis. The protein is 3-ketodihydrosphingosine reductase (Kdsr) of Mus musculus (Mouse).